The primary structure comprises 484 residues: Secreted RxLR effector protein 104 (484 aa).

An N-terminal signal peptide occupies residues 1–24 (MRSAYPVLTALLVVASSQIAAGSG). Positions 48 to 65 (RFLRGSRDVHNNVANEER) match the RxLR-dEER motif. The N-linked (GlcNAc...) asparagine glycan is linked to N175. The interval 324-463 (ENPKGQSPYP…SSSVLTPEDV (140 aa)) is disordered. Over residues 327–346 (KGQSPYPSTPLTAASTSKGG) the composition is skewed to polar residues. A compositionally biased stretch (low complexity) spans 402–413 (SSSSGPSRAFAP). The span at 418-428 (DQTFITENSRL) shows a compositional bias: polar residues.

Belongs to the RxLR effector family.

The protein localises to the secreted. The protein resides in the host nucleus. Functionally, secreted effector that completely suppresses the host cell death induced by cell death-inducing proteins. The chain is Secreted RxLR effector protein 104 from Plasmopara viticola (Downy mildew of grapevine).